Here is a 316-residue protein sequence, read N- to C-terminus: 4-hydroxyphenylacetate decarboxylase activating enzyme (316 aa).

One can recognise a Radical SAM core domain in the interval 20–307; the sequence is HDGPGCRTTV…QDIFLDNGIA (288 aa). Residues Cys-34, Cys-38, Cys-41, Cys-60, Cys-66, Cys-69, and Cys-105 each contribute to the [4Fe-4S] cluster site. 40–42 contacts S-adenosyl-L-methionine; it reads WCA. One can recognise a 4Fe-4S ferredoxin-type domain in the interval 84-115; the sequence is NKPVIDWNICKDCESFECVNSCYYNAFKLCAK. S-adenosyl-L-methionine contacts are provided by residues Gly-144, 193 to 195, and His-267; that span reads DIK.

It belongs to the organic radical-activating enzymes family. As to quaternary structure, monomer. It depends on [4Fe-4S] cluster as a cofactor.

The catalysed reaction is glycyl-[protein] + reduced [flavodoxin] + S-adenosyl-L-methionine = glycin-2-yl radical-[protein] + semiquinone [flavodoxin] + 5'-deoxyadenosine + L-methionine + H(+). Functionally, catalyzes activation of 4-hydroxyphenylacetate decarboxylase under anaerobic conditions by generation of an organic free radical on a glycine residue, via a homolytic cleavage of S-adenosyl-L-methionine (SAM). This Clostridioides difficile (Peptoclostridium difficile) protein is 4-hydroxyphenylacetate decarboxylase activating enzyme.